Reading from the N-terminus, the 187-residue chain is Peptide deformylase (187 aa).

Residues C96 and H138 each contribute to the Fe cation site. Residue E139 is part of the active site. H142 serves as a coordination point for Fe cation.

It belongs to the polypeptide deformylase family. Fe(2+) is required as a cofactor.

It catalyses the reaction N-terminal N-formyl-L-methionyl-[peptide] + H2O = N-terminal L-methionyl-[peptide] + formate. In terms of biological role, removes the formyl group from the N-terminal Met of newly synthesized proteins. Requires at least a dipeptide for an efficient rate of reaction. N-terminal L-methionine is a prerequisite for activity but the enzyme has broad specificity at other positions. This Brachyspira hyodysenteriae (strain ATCC 49526 / WA1) protein is Peptide deformylase.